A 172-amino-acid polypeptide reads, in one-letter code: uncharacterized protein (172 aa).

Residues 1–29 form the signal peptide; sequence MKKKQVMLALTAAAGLGLTALHSAPAAKA. 2 consecutive SH3b domains span residues 42-105 and 112-172; these read SDTY…MKTA and KQTA…LQMR.

This is an uncharacterized protein from Bacillus subtilis (strain 168).